A 231-amino-acid chain; its full sequence is Superoxide dismutase [Mn], mitochondrial (231 aa).

Residues 1–27 (MALRTLASRKTLAAAALPLAAAAAARG) constitute a mitochondrion transit peptide. Residues His55, His103, Asp192, and His196 each contribute to the Mn(2+) site.

This sequence belongs to the iron/manganese superoxide dismutase family. In terms of assembly, homotetramer. It depends on Mn(2+) as a cofactor.

It localises to the mitochondrion matrix. It carries out the reaction 2 superoxide + 2 H(+) = H2O2 + O2. In terms of biological role, destroys superoxide anion radicals which are normally produced within the cells and which are toxic to biological systems. The chain is Superoxide dismutase [Mn], mitochondrial (SODA) from Oryza sativa subsp. japonica (Rice).